Reading from the N-terminus, the 212-residue chain is Dihydrophenazinedicarboxylate synthase (212 aa).

Serine 8 is a binding site for substrate. FMN is bound by residues 63 to 66 (RVIA) and 78 to 79 (CT). Histidine 80 lines the substrate pocket. Residues 84–85 (RK) and glutamine 107 each bind FMN. The substrate site is built by arginine 129 and serine 137. FMN is bound by residues 142–143 (QS) and arginine 195.

It belongs to the pyridoxamine 5'-phosphate oxidase family. FMN is required as a cofactor.

It catalyses the reaction (1R,6R)-1,4,5,5a,6,9-hexahydrophenazine-1,6-dicarboxylate + O2 = (1R,10aS)-1,4,10,10a-tetrahydrophenazine-1,6-dicarboxylate + H2O2. The catalysed reaction is (1R,10aS)-1,4,10,10a-tetrahydrophenazine-1,6-dicarboxylate + O2 = (5aS)-5,5a-dihydrophenazine-1,6-dicarboxylate + H2O2. It carries out the reaction (1R,10aS)-1,4,10,10a-tetrahydrophenazine-1-carboxylate + O2 = (10aS)-10,10a-dihydrophenazine-1-carboxylate + H2O2. The enzyme catalyses (1R)-1,4,5,10-tetrahydrophenazine-1-carboxylate + O2 = (10aS)-10,10a-dihydrophenazine-1-carboxylate + H2O2. Its pathway is antibiotic biosynthesis; phenazine biosynthesis. Its function is as follows. Involved in the biosynthesis of the antibiotic phenazine, a nitrogen-containing heterocyclic molecule having important roles in virulence, competition and biological control. Catalyzes several oxidations in the terminal steps of core phenazine biosynthesis. It oxidizes both hexahydrophenazine-1,6-dicarboxylic acid (HHPDC) and tetrahydrophenazine-1-carboxylic acid (THPCA) and thereby contributes to the generation of both phenazine-1,6-dicarboxylic acid (PDC) and phenazine-1-carboxylic acid (PCA). It synthesizes phenazines in their reduced form, which are the likely end products in vivo. The protein is Dihydrophenazinedicarboxylate synthase of Burkholderia lata (strain ATCC 17760 / DSM 23089 / LMG 22485 / NCIMB 9086 / R18194 / 383).